The chain runs to 156 residues: Small ribosomal subunit protein uS7 (156 aa).

Belongs to the universal ribosomal protein uS7 family. Part of the 30S ribosomal subunit. Contacts proteins S9 and S11.

One of the primary rRNA binding proteins, it binds directly to 16S rRNA where it nucleates assembly of the head domain of the 30S subunit. Is located at the subunit interface close to the decoding center, probably blocks exit of the E-site tRNA. The protein is Small ribosomal subunit protein uS7 of Chlorobaculum parvum (strain DSM 263 / NCIMB 8327) (Chlorobium vibrioforme subsp. thiosulfatophilum).